Reading from the N-terminus, the 393-residue chain is NAD(P)H-quinone oxidoreductase subunit H, chloroplastic (393 aa).

The protein belongs to the complex I 49 kDa subunit family. NDH is composed of at least 16 different subunits, 5 of which are encoded in the nucleus.

The protein localises to the plastid. It is found in the chloroplast thylakoid membrane. It catalyses the reaction a plastoquinone + NADH + (n+1) H(+)(in) = a plastoquinol + NAD(+) + n H(+)(out). The enzyme catalyses a plastoquinone + NADPH + (n+1) H(+)(in) = a plastoquinol + NADP(+) + n H(+)(out). Functionally, NDH shuttles electrons from NAD(P)H:plastoquinone, via FMN and iron-sulfur (Fe-S) centers, to quinones in the photosynthetic chain and possibly in a chloroplast respiratory chain. The immediate electron acceptor for the enzyme in this species is believed to be plastoquinone. Couples the redox reaction to proton translocation, and thus conserves the redox energy in a proton gradient. The sequence is that of NAD(P)H-quinone oxidoreductase subunit H, chloroplastic from Daucus carota (Wild carrot).